The primary structure comprises 120 residues: Large ribosomal subunit protein uL22 (120 aa).

It belongs to the universal ribosomal protein uL22 family. In terms of assembly, part of the 50S ribosomal subunit.

This protein binds specifically to 23S rRNA; its binding is stimulated by other ribosomal proteins, e.g. L4, L17, and L20. It is important during the early stages of 50S assembly. It makes multiple contacts with different domains of the 23S rRNA in the assembled 50S subunit and ribosome. Its function is as follows. The globular domain of the protein is located near the polypeptide exit tunnel on the outside of the subunit, while an extended beta-hairpin is found that lines the wall of the exit tunnel in the center of the 70S ribosome. This chain is Large ribosomal subunit protein uL22, found in Crocosphaera subtropica (strain ATCC 51142 / BH68) (Cyanothece sp. (strain ATCC 51142)).